Consider the following 505-residue polypeptide: MAWENVRVRVAPSPTGDPHVGTAYMALFNAIFAKRFNGKMILRIEDTDQTRSRDDYEKNIFSALQWCGIQWDEGPDIGGPYGPYRQSERTEIYRKYAELLLKTDYAYKCFATPKELEEMRAVATTLGYRGGYDRRYRYLSSEEVDARTREGQPYTIRLKVPLTGECVLDDYCKGRVVFPWADVDDQVLIKSDGFPTYHFANVVDDHLMGITHVLRGEEWLSSTPKHLLLYQAFGWKAPTFLHMPLLLNPDGTKLSKRKNPTSIFYYRDAGYIKEAFMNFLTLMGYSMEGDEEIYSLEKLIANFDPRRIGKSGAVFDTRKLDWMNKHYLTHERSSESLLAKLKDWLINDEFFLKILPLCQSRITTLAEFIGFTGFFFSVLPEYSKEELLPTTISQEKAAILLYSYVKYLEKSDLWVKDQFYQGSKWLSSAFQVHHKKVVIPLLYVAITGKKQGLPLFDSMELLGKPRTRARLVHAQNLLGGVPKKIQTTIDKVLKEEDLESKIFEF.

The short motif at 12–22 (PSPTGDPHVGT) is the 'HIGH' region element. The short motif at 253–257 (KLSKR) is the 'KMSKS' region element. Position 256 (Lys256) interacts with ATP.

It belongs to the class-I aminoacyl-tRNA synthetase family. Glutamate--tRNA ligase type 1 subfamily. Monomer.

It localises to the cytoplasm. The catalysed reaction is tRNA(Glu) + L-glutamate + ATP = L-glutamyl-tRNA(Glu) + AMP + diphosphate. Functionally, catalyzes the attachment of glutamate to tRNA(Glu) in a two-step reaction: glutamate is first activated by ATP to form Glu-AMP and then transferred to the acceptor end of tRNA(Glu). This is Glutamate--tRNA ligase from Chlamydia abortus (strain DSM 27085 / S26/3) (Chlamydophila abortus).